Here is a 302-residue protein sequence, read N- to C-terminus: Putative S-adenosyl-L-methionine-dependent methyltransferase MUL_2961 (302 aa).

Residues Asp128 and 157-158 (DL) each bind S-adenosyl-L-methionine.

This sequence belongs to the UPF0677 family.

In terms of biological role, exhibits S-adenosyl-L-methionine-dependent methyltransferase activity. The protein is Putative S-adenosyl-L-methionine-dependent methyltransferase MUL_2961 of Mycobacterium ulcerans (strain Agy99).